We begin with the raw amino-acid sequence, 877 residues long: Alanine--tRNA ligase (877 aa).

Zn(2+) is bound by residues His-567, His-571, Cys-669, and His-673.

This sequence belongs to the class-II aminoacyl-tRNA synthetase family. It depends on Zn(2+) as a cofactor.

The protein resides in the cytoplasm. The catalysed reaction is tRNA(Ala) + L-alanine + ATP = L-alanyl-tRNA(Ala) + AMP + diphosphate. In terms of biological role, catalyzes the attachment of alanine to tRNA(Ala) in a two-step reaction: alanine is first activated by ATP to form Ala-AMP and then transferred to the acceptor end of tRNA(Ala). Also edits incorrectly charged Ser-tRNA(Ala) and Gly-tRNA(Ala) via its editing domain. The chain is Alanine--tRNA ligase from Rickettsia prowazekii (strain Madrid E).